The following is a 617-amino-acid chain: Pyrophosphate--fructose 6-phosphate 1-phosphotransferase subunit alpha 2 (617 aa).

Belongs to the phosphofructokinase type A (PFKA) family. PPi-dependent PFK group II subfamily. Clade 'Long' sub-subfamily. Tetramer of two alpha (regulatory) and two beta (catalytic) chains. As to expression, expressed in roots and specific parts such as the trichomes of leaves, cotyledon veins, as well as in stamen and gynoecium of flowers.

It localises to the cytoplasm. It participates in carbohydrate degradation; glycolysis; D-glyceraldehyde 3-phosphate and glycerone phosphate from D-glucose: step 3/4. Allosterically activated by fructose 2,6-bisphosphate. Regulatory subunit of pyrophosphate--fructose 6-phosphate 1-phosphotransferase. The chain is Pyrophosphate--fructose 6-phosphate 1-phosphotransferase subunit alpha 2 from Arabidopsis thaliana (Mouse-ear cress).